We begin with the raw amino-acid sequence, 144 residues long: Large ribosomal subunit protein uL16 (144 aa).

Belongs to the universal ribosomal protein uL16 family. In terms of assembly, part of the 50S ribosomal subunit.

Binds 23S rRNA and is also seen to make contacts with the A and possibly P site tRNAs. The chain is Large ribosomal subunit protein uL16 from Bacillus subtilis (strain 168).